A 281-amino-acid chain; its full sequence is ATP synthase gamma chain (281 aa).

This sequence belongs to the ATPase gamma chain family. In terms of assembly, F-type ATPases have 2 components, CF(1) - the catalytic core - and CF(0) - the membrane proton channel. CF(1) has five subunits: alpha(3), beta(3), gamma(1), delta(1), epsilon(1). CF(0) has three main subunits: a, b and c.

It localises to the cell membrane. In terms of biological role, produces ATP from ADP in the presence of a proton gradient across the membrane. The gamma chain is believed to be important in regulating ATPase activity and the flow of protons through the CF(0) complex. This is ATP synthase gamma chain from Clostridium pasteurianum.